We begin with the raw amino-acid sequence, 840 residues long: Phosphatidylglycerol lysyltransferase (840 aa).

Residues 1–8 are Cytoplasmic-facing; sequence MNQEVKNK. Residues 9–29 traverse the membrane as a helical segment; the sequence is IFSILKITFATALFIFVAITL. At 30–52 the chain is on the extracellular side; it reads YRELSGINFKDTLVEFSKINRMS. The helical transmembrane segment at 53–73 threads the bilayer; the sequence is LVLLFIGGGASLVILSMYDVI. Residues 74–89 are Cytoplasmic-facing; that stretch reads LSRALKMDISLGKVLR. Residues 90–110 form a helical membrane-spanning segment; that stretch reads VSYIINALNAIVGFGGFIGAG. Residues 111–128 are Extracellular-facing; the sequence is VRAMVYKNYTHDKKKLVH. Residues 129-149 form a helical membrane-spanning segment; sequence FISLILISMLTGLSLLSLLIV. Over 150–161 the chain is Cytoplasmic; that stretch reads FHVFDASLILDK. A helical transmembrane segment spans residues 162–182; sequence ITWVRWVLYVVSFFLPLFIIY. The Extracellular portion of the chain corresponds to 183 to 200; the sequence is SMVRPPDKNNRFVGLYCT. A helical membrane pass occupies residues 201 to 221; the sequence is LVSCVEWLAAAVVLYFCGVIV. The Cytoplasmic segment spans residues 222-229; it reads DAHVSFMS. A helical transmembrane segment spans residues 230–250; sequence FIAIFIIAALSGLVSFIPGGF. At 251–271 the chain is on the extracellular side; it reads GAFDLVVLLGFKTLGVPEEKV. Residues 272-292 form a helical membrane-spanning segment; sequence LLMLLLYRFAYYFVPVIIALI. Over 293-337 the chain is Cytoplasmic; sequence LSSFEFGTSAKKYIEGSKYFIPAKDVTSFLMSYQKDIIAKIPSLS. A helical transmembrane segment spans residues 338-358; it reads LAILVFFTSMIFFVNNLTIVY. Over 359–369 the chain is Extracellular; that stretch reads DALYDGNHLTY. A helical transmembrane segment spans residues 370–390; it reads YILLAIHTSACLLLLLNVVGI. Residues 391-394 are Cytoplasmic-facing; that stretch reads YKQS. 2 helical membrane passes run 395 to 415 and 416 to 436; these read RRAIIFAMISILLITVATFFT and YASYILITWLAIIFVLLIVAF. Residues 437–450 lie on the Cytoplasmic side of the membrane; it reads RRARRLKRPVRMRN. Residues 451-471 traverse the membrane as a helical segment; that stretch reads IVAMLLFSLFILYVNHIFIAG. Topologically, residues 472–489 are extracellular; the sequence is TLYALDIYTIEMHTSVLR. The helical transmembrane segment at 490–510 threads the bilayer; that stretch reads YYFWLTILIIAIIIGMIAWLF. At 511 to 840 the chain is on the cytoplasmic side; that stretch reads DYQFSKVRIS…SKVMRVIRHK (330 aa).

It belongs to the LPG synthase family.

It is found in the cell membrane. The enzyme catalyses L-lysyl-tRNA(Lys) + a 1,2-diacyl-sn-glycero-3-phospho-(1'-sn-glycerol) = a 1,2-diacyl-sn-glycero-3-phospho-1'-(3'-O-L-lysyl)-sn-glycerol + tRNA(Lys). Catalyzes the transfer of a lysyl group from L-lysyl-tRNA(Lys) to membrane-bound phosphatidylglycerol (PG), which produces lysylphosphatidylglycerol (LPG), a major component of the bacterial membrane with a positive net charge. LPG synthesis contributes to bacterial virulence as it is involved in the resistance mechanism against cationic antimicrobial peptides (CAMP) produces by the host's immune system (defensins, cathelicidins) and by the competing microorganisms (bacteriocins). In fact, the modification of anionic phosphatidylglycerol with positively charged L-lysine results in repulsion of the peptides. The polypeptide is Phosphatidylglycerol lysyltransferase (mprF) (Staphylococcus aureus (strain COL)).